Consider the following 865-residue polypeptide: Fatty acyl-CoA synthetase and RNA processing-associated kinase 1 (865 aa).

One can recognise a Protein kinase domain in the interval 41 to 313; that stretch reads YILGSTLGEG…LKQIKKHEWL (273 aa). Residues 47–55 and Lys-80 contribute to the ATP site; that span reads LGEGEFGKV. Residue Asp-175 is the Proton acceptor of the active site. A disordered region spans residues 341–398; sequence KPRRRYGSRPQSSCSTSSLGSRSDKRDSLVIDSTLITFPAPPQESQNHIITRPASIAS. Residues 352-361 are compositionally biased toward low complexity; sequence SSCSTSSLGS. Ser-441 carries the post-translational modification Phosphoserine. Disordered regions lie at residues 480–554, 673–733, and 754–782; these read ISGS…YTTP, TEES…LNEA, and SLYS…YQTN. Over residues 494 to 538 the composition is skewed to polar residues; sequence STTMQTSKIQPNNMASSQNHQYNKNKTQNSLQSAKNFYRTSSSSH. Composition is skewed to basic and acidic residues over residues 690–708 and 724–733; these read EGQE…EKGS and NHLERSLNEA.

The protein belongs to the protein kinase superfamily. Ser/Thr protein kinase family. In terms of assembly, interacts with FAA3, POL5 and TPA1.

It is found in the cytoplasm. It catalyses the reaction L-seryl-[protein] + ATP = O-phospho-L-seryl-[protein] + ADP + H(+). The catalysed reaction is L-threonyl-[protein] + ATP = O-phospho-L-threonyl-[protein] + ADP + H(+). In terms of biological role, putative serine/threonine-protein kinase that may be involved in rRNA transcription and ribosome biogenesis. In Saccharomyces cerevisiae (strain ATCC 204508 / S288c) (Baker's yeast), this protein is Fatty acyl-CoA synthetase and RNA processing-associated kinase 1 (FRK1).